The chain runs to 701 residues: Mediator of RNA polymerase II transcription subunit 25 (701 aa).

Disordered regions lie at residues 277–388 (AAQK…GAQQ) and 580–617 (AAATGNQQAPVTGAPPNQVQGQAQAPGGGMLRLQNPGA). Positions 286–306 (ANQQQKNRFGQISTPPFSQSP) are enriched in polar residues. Composition is skewed to low complexity over residues 314-367 (PSLS…NNQQ) and 593-604 (APPNQVQGQAQA). An LXXLL motif motif is present at residues 621–625 (LRSLL). Residues 650-689 (APGGGAQMQPQWRQPHQGPLMVPTGPRGPVTQNPGMPSVS) are disordered. Polar residues predominate over residues 679–689 (VTQNPGMPSVS).

The protein belongs to the Mediator complex subunit 25 family. As to quaternary structure, component of the Mediator complex.

It is found in the nucleus. Functionally, component of the Mediator complex, a coactivator involved in the regulated transcription of nearly all RNA polymerase II-dependent genes. Mediator functions as a bridge to convey information from gene-specific regulatory proteins to the basal RNA polymerase II transcription machinery. Mediator is recruited to promoters by direct interactions with regulatory proteins and serves as a scaffold for the assembly of a functional preinitiation complex with RNA polymerase II and the general transcription factors. This is Mediator of RNA polymerase II transcription subunit 25 (med25) from Danio rerio (Zebrafish).